The following is a 375-amino-acid chain: Chaperone protein DnaJ (375 aa).

The J domain occupies 5 to 70; it reads DYYEVLGVNR…RKRASYDQFG (66 aa). Residues 133–211 form a CR-type zinc finger; that stretch reads GLSRTIKVPT…CHGQGRQQQT (79 aa). Zn(2+)-binding residues include Cys146, Cys149, Cys163, Cys166, Cys185, Cys188, Cys199, and Cys202. CXXCXGXG motif repeat units follow at residues 146-153, 163-170, 185-192, and 199-206; these read CKTCNGSG, CPRCNGSG, CSVCRGRG, and CTDCHGQG.

Belongs to the DnaJ family. In terms of assembly, homodimer. Requires Zn(2+) as cofactor.

It localises to the cytoplasm. Functionally, participates actively in the response to hyperosmotic and heat shock by preventing the aggregation of stress-denatured proteins and by disaggregating proteins, also in an autonomous, DnaK-independent fashion. Unfolded proteins bind initially to DnaJ; upon interaction with the DnaJ-bound protein, DnaK hydrolyzes its bound ATP, resulting in the formation of a stable complex. GrpE releases ADP from DnaK; ATP binding to DnaK triggers the release of the substrate protein, thus completing the reaction cycle. Several rounds of ATP-dependent interactions between DnaJ, DnaK and GrpE are required for fully efficient folding. Also involved, together with DnaK and GrpE, in the DNA replication of plasmids through activation of initiation proteins. The polypeptide is Chaperone protein DnaJ (Coxiella burnetii (strain CbuK_Q154) (Coxiella burnetii (strain Q154))).